The primary structure comprises 285 residues: UPF0603 protein At1g54780, chloroplastic (285 aa).

Disordered regions lie at residues 1-48 and 228-251; these read METL…LSTR and GQPD…TKEE. Residues 22–40 show a composition bias toward polar residues; that stretch reads HQTKPTSHSLSLSKPTTFS. Residues 238 to 251 are compositionally biased toward basic and acidic residues; the sequence is KDSKRESNFKTKEE. Residues 259 to 279 traverse the membrane as a helical segment; sequence FSLVVGGLLVIAFVVPMAQYF.

It belongs to the UPF0603 family.

The protein localises to the plastid. It localises to the chloroplast thylakoid membrane. The sequence is that of UPF0603 protein At1g54780, chloroplastic from Arabidopsis thaliana (Mouse-ear cress).